The following is a 1058-amino-acid chain: COP1-interacting protein 7 (1058 aa).

3 disordered regions span residues 123–147 (LGGT…GDTV), 262–281 (HGNS…QEGR), and 330–463 (MGDV…GNDN). Polar residues-rich tracts occupy residues 126 to 136 (TWTSQKSTALS) and 262 to 276 (HGNS…SFET). The Nuclear localization signal 1 signature appears at 340–347 (SKKKKKKK). Residues 340–353 (SKKKKKKKKNKKKS) show a composition bias toward basic residues. Positions 403–414 (DSDESGEEEGFV) are enriched in acidic residues. The short motif at 431 to 438 (ERRHKSTS) is the Nuclear localization signal 2 element. Residues 432-446 (RRHKSTSHRQRKHKS) show a composition bias toward basic residues. Over residues 447-462 (HNGDDDSSNKETKGND) the composition is skewed to basic and acidic residues. Position 477 is a phosphoserine (serine 477). The disordered stretch occupies residues 708–887 (AGEQTLDGKE…KSVELSRDPS (180 aa)). Residues 757-773 (SKSEMEEERKKRMEELL) are compositionally biased toward basic and acidic residues. Positions 764–771 (ERKKRMEE) match the Nuclear localization signal 3 motif. Low complexity predominate over residues 783 to 808 (KSSGGSVSSSLASKKTPTVTKSVKSS). Basic and acidic residues-rich tracts occupy residues 860-869 (KTEKAQEKKS) and 878-887 (KSVELSRDPS). 3 positions are modified to phosphoserine: serine 915, serine 986, and serine 992. Positions 1020–1041 (STPPATEADHSRKKWNSEETSP) are disordered. Positions 1026 to 1040 (EADHSRKKWNSEETS) are enriched in basic and acidic residues.

As to quaternary structure, interacts with COP1.

It localises to the nucleus. Exhibits transcriptional activation activity. Positive regulator of light-regulated genes, probably being a direct downstream target of COP1 for mediating light control of gene expression. The protein is COP1-interacting protein 7 of Arabidopsis thaliana (Mouse-ear cress).